Reading from the N-terminus, the 469-residue chain is E3 ubiquitin-protein ligase TRIM21 (469 aa).

Residues 16-55 (CSICLDPMVEPMSIECGHSFCQECISEVGKEGGSVCPVCR) form an RING-type zinc finger. The B box-type zinc-finger motif lies at 87 to 128 (PHGELCVVHREKIHLFCEEDGKALCWVCSQSQKHRDHPMVPI). Residues C92, H95, C114, and H120 each coordinate Zn(2+). Residues 128 to 245 (IEEAAQEYQE…RRGSALELLQ (118 aa)) adopt a coiled-coil conformation. S266 bears the Phosphoserine mark. In terms of domain architecture, B30.2/SPRY spans 268-467 (DLRNVFYVPG…APLILCPLKT (200 aa)).

It belongs to the TRIM/RBCC family. As to quaternary structure, homotrimer. Interacts (via C-terminus) with IRF8 (via C-terminus). Component of a SCF(SKP2)-like complex containing CUL1, SKP1, TRIM21 and SKP2. Interacts with CALR, CUL1, FBXW11, HSPA5, IKBKB, IRF3, SKP1 and VCP. Interacts with SKP2; the interaction with SKP2 does not depend on an intact F-box domain. Interacts (via N-terminus and C-terminus) with DCP2 (via N-terminus and C-terminus). Interacts with ULK1, BECN1 and with ATG8 family members, including GABARAP, GABARAPL1, GABARAPL2 and MAP1LC3C/LC3C. Interacts with TRIM21 and SQSTM1/sequestosome 1. Interacts with IRF3. Interacts (via the SPRY domain) with NMI (via coiled-coil domain); the interaction promotes 'Lys-63'-linked ubiquitination of NMI. Interacts with IFI35 and NMI; the interaction facilitates NMI-IFI35 complex formation. In terms of processing, autoubiquitinated; does not lead to its proteasomal degradation. Deubiquitinated by USP4; leading to its stabilization.

The protein resides in the cytoplasm. The protein localises to the cytoplasmic vesicle. It is found in the autophagosome. It localises to the nucleus. Its subcellular location is the P-body. The protein resides in the stress granule. The catalysed reaction is S-ubiquitinyl-[E2 ubiquitin-conjugating enzyme]-L-cysteine + [acceptor protein]-L-lysine = [E2 ubiquitin-conjugating enzyme]-L-cysteine + N(6)-ubiquitinyl-[acceptor protein]-L-lysine.. It functions in the pathway protein modification; protein ubiquitination. In terms of biological role, E3 ubiquitin-protein ligase whose activity is dependent on E2 enzymes, UBE2D1, UBE2D2, UBE2E1 and UBE2E2. Forms a ubiquitin ligase complex in cooperation with the E2 UBE2D2 that is used not only for the ubiquitination of USP4 and IKBKB but also for its self-ubiquitination. Component of cullin-RING-based SCF (SKP1-CUL1-F-box protein) E3 ubiquitin-protein ligase complexes such as SCF(SKP2)-like complexes. A TRIM21-containing SCF(SKP2)-like complex is shown to mediate ubiquitination of CDKN1B ('Thr-187' phosphorylated-form), thereby promoting its degradation by the proteasome. Monoubiquitinates IKBKB that will negatively regulates Tax-induced NF-kappa-B signaling. Negatively regulates IFN-beta production post-pathogen recognition by catalyzing polyubiquitin-mediated degradation of IRF3. Mediates the ubiquitin-mediated proteasomal degradation of IgG1 heavy chain, which is linked to the VCP-mediated ER-associated degradation (ERAD) pathway. Promotes IRF8 ubiquitination, which enhanced the ability of IRF8 to stimulate cytokine genes transcription in macrophages. Plays a role in the regulation of the cell cycle progression. Enhances the decapping activity of DCP2. Exists as a ribonucleoprotein particle present in all mammalian cells studied and composed of a single polypeptide and one of four small RNA molecules. At least two isoforms are present in nucleated and red blood cells, and tissue specific differences in RO/SSA proteins have been identified. The common feature of these proteins is their ability to bind HY RNAs.2. Involved in the regulation of innate immunity and the inflammatory response in response to IFNG/IFN-gamma. Organizes autophagic machinery by serving as a platform for the assembly of ULK1, Beclin 1/BECN1 and ATG8 family members and recognizes specific autophagy targets, thus coordinating target recognition with assembly of the autophagic apparatus and initiation of autophagy. Also regulates autophagy through FIP200/RB1CC1 ubiquitination and subsequent decreased protein stability. Represses the innate antiviral response by facilitating the formation of the NMI-IFI35 complex through 'Lys-63'-linked ubiquitination of NMI. During viral infection, promotes cell pyroptosis by mediating 'Lys-6'-linked ubiquitination of ISG12a/IFI27, facilitating its translocation into the mitochondria and subsequent CASP3 activation. When up-regulated through the IFN/JAK/STAT signaling pathway, promotes 'Lys-27'-linked ubiquitination of MAVS, leading to the recruitment of TBK1 and up-regulation of innate immunity. Mediates 'Lys-63'-linked polyubiquitination of G3BP1 in response to heat shock, leading to stress granule disassembly. In Bos taurus (Bovine), this protein is E3 ubiquitin-protein ligase TRIM21 (TRIM21).